The primary structure comprises 353 residues: Photosystem II protein D1 (353 aa).

N-acetylthreonine is present on Thr2. Thr2 is modified (phosphothreonine). The next 3 membrane-spanning stretches (helical) occupy residues 29–46 (YIGW…TATS), 118–133 (HFLL…EWEL), and 142–156 (WIVV…AATA). His118 is a binding site for chlorophyll a. Tyr126 lines the pheophytin a pocket. Asp170 and Glu189 together coordinate [CaMn4O5] cluster. Residues 197 to 218 (FHMLGVAGVFGGSLFSAMHGSL) form a helical membrane-spanning segment. Chlorophyll a is bound at residue His198. Residues His215 and 264 to 265 (SF) contribute to the a quinone site. His215 lines the Fe cation pocket. His272 is a Fe cation binding site. The chain crosses the membrane as a helical span at residues 274–288 (FLAAWPVVGIWFTAL). The [CaMn4O5] cluster site is built by His332, Glu333, Asp342, and Ala344. Positions 345 to 353 (AVDAPSISG) are excised as a propeptide.

Belongs to the reaction center PufL/M/PsbA/D family. As to quaternary structure, PSII is composed of 1 copy each of membrane proteins PsbA, PsbB, PsbC, PsbD, PsbE, PsbF, PsbH, PsbI, PsbJ, PsbK, PsbL, PsbM, PsbT, PsbX, PsbY, PsbZ, Psb30/Ycf12, at least 3 peripheral proteins of the oxygen-evolving complex and a large number of cofactors. It forms dimeric complexes. The cofactor is The D1/D2 heterodimer binds P680, chlorophylls that are the primary electron donor of PSII, and subsequent electron acceptors. It shares a non-heme iron and each subunit binds pheophytin, quinone, additional chlorophylls, carotenoids and lipids. D1 provides most of the ligands for the Mn4-Ca-O5 cluster of the oxygen-evolving complex (OEC). There is also a Cl(-1) ion associated with D1 and D2, which is required for oxygen evolution. The PSII complex binds additional chlorophylls, carotenoids and specific lipids.. Tyr-161 forms a radical intermediate that is referred to as redox-active TyrZ, YZ or Y-Z. In terms of processing, C-terminally processed by CTPA; processing is essential to allow assembly of the oxygen-evolving complex and thus photosynthetic growth.

Its subcellular location is the plastid. It is found in the chloroplast thylakoid membrane. The enzyme catalyses 2 a plastoquinone + 4 hnu + 2 H2O = 2 a plastoquinol + O2. In terms of biological role, photosystem II (PSII) is a light-driven water:plastoquinone oxidoreductase that uses light energy to abstract electrons from H(2)O, generating O(2) and a proton gradient subsequently used for ATP formation. It consists of a core antenna complex that captures photons, and an electron transfer chain that converts photonic excitation into a charge separation. The D1/D2 (PsbA/PsbD) reaction center heterodimer binds P680, the primary electron donor of PSII as well as several subsequent electron acceptors. The protein is Photosystem II protein D1 of Vicia faba (Broad bean).